The following is a 147-amino-acid chain: Deoxyuridine 5'-triphosphate nucleotidohydrolase (147 aa).

Residues Ser-69, Gly-82, Asp-85, Tyr-88, Lys-93, Arg-137, Phe-142, and Gly-143 each coordinate dUMP.

Belongs to the dUTPase family. As to quaternary structure, homotrimer. Mg(2+) is required as a cofactor.

The catalysed reaction is dUTP + H2O = dUMP + diphosphate + H(+). It participates in pyrimidine metabolism; dUMP biosynthesis; dUMP from dCTP (dUTP route): step 2/2. Its function is as follows. Involved in nucleotide metabolism via production of dUMP, the immediate precursor of thymidine nucleotides, and decreases the intracellular concentration of dUTP so that uracil cannot be incorporated into DNA. Shows a significant activity against dITP, another potentially mutagenic nucleotide. In Saccharomyces cerevisiae (strain ATCC 204508 / S288c) (Baker's yeast), this protein is Deoxyuridine 5'-triphosphate nucleotidohydrolase.